We begin with the raw amino-acid sequence, 651 residues long: Transcription termination factor FttA (651 aa).

Residues 1–200 (MTFLIKRETQ…ITGLGGFREV (200 aa)) form an archaeal CPSF-KH domain region. The interval 12 to 79 (DQILRDIRAV…ISVRPDPEVL (68 aa)) is KHa. Positions 80-147 (LPPEEAEKLI…WAPKVVRTPP (68 aa)) are KHb. The segment at 188 to 398 (WIRITGLGGF…LVMESTYGGA (211 aa)) is metallo-beta-lactamase N-terminus. 6 residues coordinate Zn(2+): histidine 256, histidine 258, aspartate 260, histidine 261, histidine 344, and aspartate 367. The tract at residues 399 to 592 (NDIQMPREEA…MEVHTIDGFS (194 aa)) is beta-Casp. Positions 593-651 (GHADRRELMNYVAKVRPRPERIITVHGEPQKCLDLATSIHRKFGISTRAPNNLDTIRLR) are metallo-beta-lactamase C-terminus. Residue histidine 618 participates in Zn(2+) binding.

The protein belongs to the metallo-beta-lactamase superfamily. RNA-metabolizing metallo-beta-lactamase-like family. FttA subfamily. Homodimer. Interacts with RNA polymerase (RNAP), interacts with the Spt4-Spt5 complex. Zn(2+) serves as cofactor.

Functionally, terminates transcription on the whole genome. Termination is linked to FttA-mediated RNA cleavage and does not require NTP hydrolysis. Cleaves endonucleolytically at the RNA exit channel of RNA polymerase (RNAP); the 5'-3' exonuclease activity of this protein degrades the nascent RNA released from RNAP. Its function is as follows. Has nuclease activity on single-stranded RNA. The sequence is that of Transcription termination factor FttA from Pyrococcus horikoshii (strain ATCC 700860 / DSM 12428 / JCM 9974 / NBRC 100139 / OT-3).